Here is a 45-residue protein sequence, read N- to C-terminus: Large ribosomal subunit protein bL34 (45 aa).

The interval 22–45 is disordered; the sequence is RMRTKSGQNVIKARRRKGRARLTV. Positions 33–45 are enriched in basic residues; sequence KARRRKGRARLTV.

It belongs to the bacterial ribosomal protein bL34 family.

The sequence is that of Large ribosomal subunit protein bL34 from Thermosynechococcus vestitus (strain NIES-2133 / IAM M-273 / BP-1).